Reading from the N-terminus, the 690-residue chain is Potassium-transporting ATPase ATP-binding subunit (690 aa).

4 helical membrane-spanning segments follow: residues Ser-49 to Pro-69, Ala-72 to Ala-92, Val-229 to Leu-249, and Ala-253 to Ile-273. The active-site 4-aspartylphosphate intermediate is the Asp-317. ATP contacts are provided by residues Asp-354, Glu-358, Phe-385–Ser-392, and Lys-403. Mg(2+) is bound by residues Asp-526 and Asp-530. Helical transmembrane passes span Phe-596–Met-616, Ala-624–Leu-644, and Leu-662–Leu-682.

The protein belongs to the cation transport ATPase (P-type) (TC 3.A.3) family. Type IA subfamily. As to quaternary structure, the system is composed of three essential subunits: KdpA, KdpB and KdpC.

The protein resides in the cell inner membrane. The enzyme catalyses K(+)(out) + ATP + H2O = K(+)(in) + ADP + phosphate + H(+). Functionally, part of the high-affinity ATP-driven potassium transport (or Kdp) system, which catalyzes the hydrolysis of ATP coupled with the electrogenic transport of potassium into the cytoplasm. This subunit is responsible for energy coupling to the transport system and for the release of the potassium ions to the cytoplasm. The polypeptide is Potassium-transporting ATPase ATP-binding subunit (Pseudomonas aeruginosa (strain ATCC 15692 / DSM 22644 / CIP 104116 / JCM 14847 / LMG 12228 / 1C / PRS 101 / PAO1)).